The primary structure comprises 80 residues: Acyl carrier protein (80 aa).

The Carrier domain occupies 3–78; it reads DDTFSRIQSI…QVLEYIEAES (76 aa). The residue at position 38 (S38) is an O-(pantetheine 4'-phosphoryl)serine.

This sequence belongs to the acyl carrier protein (ACP) family. 4'-phosphopantetheine is transferred from CoA to a specific serine of apo-ACP by AcpS. This modification is essential for activity because fatty acids are bound in thioester linkage to the sulfhydryl of the prosthetic group.

The protein localises to the plastid. It is found in the chloroplast. It participates in lipid metabolism; fatty acid biosynthesis. In terms of biological role, carrier of the growing fatty acid chain in fatty acid biosynthesis. In Trieres chinensis (Marine centric diatom), this protein is Acyl carrier protein.